Consider the following 594-residue polypeptide: UvrABC system protein C (594 aa).

In terms of domain architecture, GIY-YIG spans L17–I94. The 36-residue stretch at K199 to L234 folds into the UVR domain.

Belongs to the UvrC family. In terms of assembly, interacts with UvrB in an incision complex.

Its subcellular location is the cytoplasm. The UvrABC repair system catalyzes the recognition and processing of DNA lesions. UvrC both incises the 5' and 3' sides of the lesion. The N-terminal half is responsible for the 3' incision and the C-terminal half is responsible for the 5' incision. The sequence is that of UvrABC system protein C from Staphylococcus epidermidis (strain ATCC 12228 / FDA PCI 1200).